The following is a 548-amino-acid chain: Glucose-6-phosphate isomerase (548 aa).

Residue E355 is the Proton donor of the active site. Residues H386 and K511 contribute to the active site.

Belongs to the GPI family.

The protein localises to the cytoplasm. It catalyses the reaction alpha-D-glucose 6-phosphate = beta-D-fructose 6-phosphate. The protein operates within carbohydrate biosynthesis; gluconeogenesis. Its pathway is carbohydrate degradation; glycolysis; D-glyceraldehyde 3-phosphate and glycerone phosphate from D-glucose: step 2/4. Functionally, catalyzes the reversible isomerization of glucose-6-phosphate to fructose-6-phosphate. This is Glucose-6-phosphate isomerase from Wigglesworthia glossinidia brevipalpis.